The sequence spans 211 residues: Uracil phosphoribosyltransferase (211 aa).

Residue 30–34 (KGLVR) participates in GTP binding. Residues Arg79, Arg104, and 133-141 (DPMLATGIT) each bind 5-phospho-alpha-D-ribose 1-diphosphate. Uracil is bound by residues Ile197 and 202-204 (GDA). Asp203 lines the 5-phospho-alpha-D-ribose 1-diphosphate pocket.

Belongs to the UPRTase family. Mg(2+) serves as cofactor.

It catalyses the reaction UMP + diphosphate = 5-phospho-alpha-D-ribose 1-diphosphate + uracil. It participates in pyrimidine metabolism; UMP biosynthesis via salvage pathway; UMP from uracil: step 1/1. With respect to regulation, allosterically activated by GTP. Functionally, catalyzes the conversion of uracil and 5-phospho-alpha-D-ribose 1-diphosphate (PRPP) to UMP and diphosphate. This Pyrobaculum islandicum (strain DSM 4184 / JCM 9189 / GEO3) protein is Uracil phosphoribosyltransferase.